The chain runs to 160 residues: uncharacterized protein (160 aa).

A helical membrane pass occupies residues M1–T21.

This sequence belongs to the IIV-6 203L/325L family.

The protein resides in the membrane. This is an uncharacterized protein from Invertebrate iridescent virus 6 (IIV-6).